A 476-amino-acid polypeptide reads, in one-letter code: Aspartyl/glutamyl-tRNA(Asn/Gln) amidotransferase subunit B (476 aa).

Belongs to the GatB/GatE family. GatB subfamily. Heterotrimer of A, B and C subunits.

The catalysed reaction is L-glutamyl-tRNA(Gln) + L-glutamine + ATP + H2O = L-glutaminyl-tRNA(Gln) + L-glutamate + ADP + phosphate + H(+). It catalyses the reaction L-aspartyl-tRNA(Asn) + L-glutamine + ATP + H2O = L-asparaginyl-tRNA(Asn) + L-glutamate + ADP + phosphate + 2 H(+). Functionally, allows the formation of correctly charged Asn-tRNA(Asn) or Gln-tRNA(Gln) through the transamidation of misacylated Asp-tRNA(Asn) or Glu-tRNA(Gln) in organisms which lack either or both of asparaginyl-tRNA or glutaminyl-tRNA synthetases. The reaction takes place in the presence of glutamine and ATP through an activated phospho-Asp-tRNA(Asn) or phospho-Glu-tRNA(Gln). The protein is Aspartyl/glutamyl-tRNA(Asn/Gln) amidotransferase subunit B of Lactobacillus acidophilus (strain ATCC 700396 / NCK56 / N2 / NCFM).